Reading from the N-terminus, the 341-residue chain is Malate dehydrogenase, mitochondrial (341 aa).

NAD(+)-binding positions include 35-41 (GAGGGIG) and Asp-61. Residues Arg-109 and Arg-115 each contribute to the substrate site. NAD(+) is bound at residue Asn-122. 2 residues coordinate substrate: Asn-147 and Arg-181. His-205 functions as the Proton acceptor in the catalytic mechanism. Met-254 contributes to the NAD(+) binding site.

The protein belongs to the LDH/MDH superfamily. MDH type 1 family. As to quaternary structure, homodimer.

It is found in the mitochondrion matrix. The catalysed reaction is (S)-malate + NAD(+) = oxaloacetate + NADH + H(+). The protein is Malate dehydrogenase, mitochondrial (MDH1) of Schizosaccharomyces pombe (strain 972 / ATCC 24843) (Fission yeast).